A 361-amino-acid polypeptide reads, in one-letter code: Phosphoserine aminotransferase (361 aa).

2 residues coordinate L-glutamate: Ser9 and Arg42. Pyridoxal 5'-phosphate is bound by residues 76–77 (AR), Trp102, Thr153, Asp173, and Gln196. An N6-(pyridoxal phosphate)lysine modification is found at Lys197. 238 to 239 (NT) is a binding site for pyridoxal 5'-phosphate.

This sequence belongs to the class-V pyridoxal-phosphate-dependent aminotransferase family. SerC subfamily. As to quaternary structure, homodimer. It depends on pyridoxal 5'-phosphate as a cofactor.

It localises to the cytoplasm. It carries out the reaction O-phospho-L-serine + 2-oxoglutarate = 3-phosphooxypyruvate + L-glutamate. The catalysed reaction is 4-(phosphooxy)-L-threonine + 2-oxoglutarate = (R)-3-hydroxy-2-oxo-4-phosphooxybutanoate + L-glutamate. Its pathway is amino-acid biosynthesis; L-serine biosynthesis; L-serine from 3-phospho-D-glycerate: step 2/3. The protein operates within cofactor biosynthesis; pyridoxine 5'-phosphate biosynthesis; pyridoxine 5'-phosphate from D-erythrose 4-phosphate: step 3/5. Its function is as follows. Catalyzes the reversible conversion of 3-phosphohydroxypyruvate to phosphoserine and of 3-hydroxy-2-oxo-4-phosphonooxybutanoate to phosphohydroxythreonine. This is Phosphoserine aminotransferase from Serratia proteamaculans (strain 568).